The chain runs to 743 residues: Phenylalanine ammonia-lyase 1 (743 aa).

The active-site Proton donor/acceptor is Tyr120. Residues 224–226 (ASG) constitute a cross-link (5-imidazolinone (Ala-Gly)). Residue Ser225 is modified to 2,3-didehydroalanine (Ser). Residues Asn287, Gln377, Arg383, Asn413, Lys484, Glu512, and Asn515 each contribute to the (E)-cinnamate site.

It belongs to the PAL/histidase family. As to quaternary structure, homotetramer. Post-translationally, contains an active site 4-methylidene-imidazol-5-one (MIO), which is formed autocatalytically by cyclization and dehydration of residues Ala-Ser-Gly.

The protein localises to the cytoplasm. The enzyme catalyses L-phenylalanine = (E)-cinnamate + NH4(+). It participates in phenylpropanoid metabolism; trans-cinnamate biosynthesis; trans-cinnamate from L-phenylalanine: step 1/1. Its function is as follows. Catalyzes the non-oxidative deamination of L-phenylalanine to form trans-cinnamic acid and a free ammonium ion. Facilitates the commitment step in phenylpropanoid pathways that produce secondary metabolites such as lignins, coumarins and flavonoids. The protein is Phenylalanine ammonia-lyase 1 of Pleurotus ostreatus (Oyster mushroom).